We begin with the raw amino-acid sequence, 174 residues long: Large ribosomal subunit protein uL10 (174 aa).

The protein belongs to the universal ribosomal protein uL10 family. In terms of assembly, part of the ribosomal stalk of the 50S ribosomal subunit. The N-terminus interacts with L11 and the large rRNA to form the base of the stalk. The C-terminus forms an elongated spine to which L12 dimers bind in a sequential fashion forming a multimeric L10(L12)X complex.

In terms of biological role, forms part of the ribosomal stalk, playing a central role in the interaction of the ribosome with GTP-bound translation factors. This chain is Large ribosomal subunit protein uL10, found in Nitrosospira multiformis (strain ATCC 25196 / NCIMB 11849 / C 71).